The following is a 398-amino-acid chain: S-adenosylmethionine synthase (398 aa).

H19 contributes to the ATP binding site. Residue D21 coordinates Mg(2+). E47 contacts K(+). Residues E60 and Q103 each contribute to the L-methionine site. The flexible loop stretch occupies residues 103-113 (QSPDIAQGVDV). ATP is bound by residues 177–179 (DGK), 243–244 (RF), D252, 258–259 (RK), A275, and K279. An L-methionine-binding site is contributed by D252. An L-methionine-binding site is contributed by K283.

This sequence belongs to the AdoMet synthase family. Homotetramer; dimer of dimers. Requires Mg(2+) as cofactor. It depends on K(+) as a cofactor.

It localises to the cytoplasm. The enzyme catalyses L-methionine + ATP + H2O = S-adenosyl-L-methionine + phosphate + diphosphate. The protein operates within amino-acid biosynthesis; S-adenosyl-L-methionine biosynthesis; S-adenosyl-L-methionine from L-methionine: step 1/1. In terms of biological role, catalyzes the formation of S-adenosylmethionine (AdoMet) from methionine and ATP. The overall synthetic reaction is composed of two sequential steps, AdoMet formation and the subsequent tripolyphosphate hydrolysis which occurs prior to release of AdoMet from the enzyme. The chain is S-adenosylmethionine synthase from Symbiobacterium thermophilum (strain DSM 24528 / JCM 14929 / IAM 14863 / T).